Here is a 141-residue protein sequence, read N- to C-terminus: UPF0225 protein Rmet_0111 (141 aa).

The protein belongs to the UPF0225 family.

The chain is UPF0225 protein Rmet_0111 from Cupriavidus metallidurans (strain ATCC 43123 / DSM 2839 / NBRC 102507 / CH34) (Ralstonia metallidurans).